The following is a 139-amino-acid chain: Small ribosomal subunit protein uS12 (139 aa).

Residue Asp-102 is modified to 3-methylthioaspartic acid.

Belongs to the universal ribosomal protein uS12 family. Part of the 30S ribosomal subunit. Contacts proteins S8 and S17. May interact with IF1 in the 30S initiation complex.

Its function is as follows. With S4 and S5 plays an important role in translational accuracy. Functionally, interacts with and stabilizes bases of the 16S rRNA that are involved in tRNA selection in the A site and with the mRNA backbone. Located at the interface of the 30S and 50S subunits, it traverses the body of the 30S subunit contacting proteins on the other side and probably holding the rRNA structure together. The combined cluster of proteins S8, S12 and S17 appears to hold together the shoulder and platform of the 30S subunit. This Mycoplasma capricolum subsp. capricolum (strain California kid / ATCC 27343 / NCTC 10154) protein is Small ribosomal subunit protein uS12.